We begin with the raw amino-acid sequence, 511 residues long: RNA-splicing ligase RtcB homolog (511 aa).

Residues D125, C128, H233, H265, and H359 each coordinate Mn(2+). 232–236 (NHYAE) is a GMP binding site. GMP is bound by residues 359 to 360 (HN), 408 to 411 (GGTM), S415, 434 to 437 (HGAG), and K510. H434 serves as the catalytic GMP-histidine intermediate.

This sequence belongs to the RtcB family. In terms of assembly, catalytic component of the tRNA-splicing ligase complex. Requires Mn(2+) as cofactor.

The enzyme catalyses a 3'-end 3'-phospho-ribonucleotide-RNA + a 5'-end dephospho-ribonucleoside-RNA + GTP = a ribonucleotidyl-ribonucleotide-RNA + GMP + diphosphate. The catalysed reaction is a 3'-end 2',3'-cyclophospho-ribonucleotide-RNA + a 5'-end dephospho-ribonucleoside-RNA + GTP + H2O = a ribonucleotidyl-ribonucleotide-RNA + GMP + diphosphate + H(+). Functionally, catalytic subunit of the tRNA-splicing ligase complex that acts by directly joining spliced tRNA halves to mature-sized tRNAs by incorporating the precursor-derived splice junction phosphate into the mature tRNA as a canonical 3',5'-phosphodiester. May act as an RNA ligase with broad substrate specificity, and may function toward other RNAs. The protein is RNA-splicing ligase RtcB homolog of Plasmodium knowlesi (strain H).